The sequence spans 451 residues: MAEGEDAGWWRSWLQQSYQAVKEKSTEALEFMKRDLAEFTQVVQHDTACTIAATASVVKDRLARTEASGATEKVRKGISDFLGVISDTFAPSPDKTIDCDVITLMATPTGTTEPYDSAKARLYSLQSDPATYCNEPDGPAELLEAWLSRFSLEEKKGEIAELLATSPSIRALYTKMVPAAVSHSEFWQRYFYKVHRLEQDEVRREALKQRAEQSIHQEEPGWEEDEEEFLGMSPLPCANVKFPQAAEKASVSAALEGSQPSVHKGPSGESWAILPPELAPAEGSPSESSESVSLVTQIANPASVPVVQLQTGVQPSGNRDLSQRLLEATSEEQSPLPKPPEPGHPSAAAQEPAVCSEQTAVTGPKEVESKAQGRTETLKEEGPTDLRVFELNSDSGKSTPSNNGKKGSSTDISEDWEKDFDLDMTEEEVQLALSKVEVSGELEDEEWEDWE.

Residues 146–198 (WLSRFSLEEKKGEIAELLATSPSIRALYTKMVPAAVSHSEFWQRYFYKVHRLE) form the BSD domain. Disordered stretches follow at residues 252–296 (SAAL…SLVT) and 309–424 (LQTG…DLDM). The span at 275 to 295 (PPELAPAEGSPSESSESVSLV) shows a compositional bias: low complexity. Residues 309-320 (LQTGVQPSGNRD) show a composition bias toward polar residues. Over residues 365 to 388 (KEVESKAQGRTETLKEEGPTDLRV) the composition is skewed to basic and acidic residues. Residues 392–411 (NSDSGKSTPSNNGKKGSSTD) show a composition bias toward polar residues. The segment covering 412–424 (ISEDWEKDFDLDM) has biased composition (acidic residues).

The sequence is that of BSD domain-containing protein 1 (BSDC1) from Gallus gallus (Chicken).